Here is a 377-residue protein sequence, read N- to C-terminus: N-acetylgalactosamine-6-phosphate deacetylase (377 aa).

Glu125 serves as a coordination point for a divalent metal cation. 136–137 provides a ligand contact to substrate; it reads AH. Residues His191 and His212 each coordinate a divalent metal cation. Substrate contacts are provided by residues 215–216, Arg223, and 244–247; these read NG and DGHH. Asp269 (proton donor/acceptor) is an active-site residue. A substrate-binding site is contributed by 302 to 304; sequence LAG.

It belongs to the metallo-dependent hydrolases superfamily. NagA family. Requires a divalent metal cation as cofactor.

The catalysed reaction is N-acetyl-D-galactosamine 6-phosphate + H2O = D-galactosamine 6-phosphate + acetate. Functionally, catalyzes the deacetylation of N-acetyl-D-galactosamine 6-phosphate to D-galactosamine 6-phosphate. Can probably also catalyze the deacetylation of N-acetyl-D-glucosamine 6-phosphate to D-glucosamine 6-phosphate. This Escherichia coli O157:H7 protein is N-acetylgalactosamine-6-phosphate deacetylase (agaA).